The chain runs to 505 residues: uncharacterized protein (505 aa).

In terms of domain architecture, Radical SAM core spans 193–440 (CTNKKCNLCE…LEIKKKYIGR (248 aa)). Residues Cys-208, Cys-216, and Cys-219 each contribute to the [4Fe-4S] cluster site. The 65-residue stretch at 435 to 499 (KKYIGRVLEV…EKYLEGRILK (65 aa)) folds into the TRAM domain.

Requires [4Fe-4S] cluster as cofactor.

This is an uncharacterized protein from Methanocaldococcus jannaschii (strain ATCC 43067 / DSM 2661 / JAL-1 / JCM 10045 / NBRC 100440) (Methanococcus jannaschii).